Here is a 116-residue protein sequence, read N- to C-terminus: Large ribosomal subunit protein bL20 (116 aa).

It belongs to the bacterial ribosomal protein bL20 family.

In terms of biological role, binds directly to 23S ribosomal RNA and is necessary for the in vitro assembly process of the 50S ribosomal subunit. It is not involved in the protein synthesizing functions of that subunit. This is Large ribosomal subunit protein bL20 from Acaryochloris marina (strain MBIC 11017).